The primary structure comprises 587 residues: MAKDIFPRRPIQRPHASIEVDSSGIGGSASNSEKILCLIGKAEGGEPNTVYQVRNYAQAKSVFRSGELLDAIELAWGSNPQYTAGKILAMRVEDAKASQLEKGGLRVTSKIFGSVSNDIQVALEKNTITDSLRLRVVFQKDNYQEVFDNLGNIFSINYKGEGEKATFSVEKDKETQEAKRLVLKVDEKEVKAYELNGGAYSFTNEIITDINELPDFEAKLSPFGDKNLESRKLDEATDVDIKGKAVYVKAVFGDIENQTQYNQYVKFEQLPEQASEPSDVEVHAETESATVTATSKPKAIEPFELTKLSGGTNGEPPTSWSAKLEKFKNEGGYYIVPLTDRQSVHSEVATFVKNRSDAGEPMRAIVGGGTSETKEKLFGRQAILNNPRVALVANSGKFVMGNGRILQAPAYMVASAVAGLVSGLDIGESITFKPLFVNSLDKVYESEELDELNENGIITIEFVRNRMTTMFRIVDDVTTFPDKNDPVKSEMALGEANDFLVSELKILLEEQYIGTRTINTSASQIKDFVQSYLGRKKRDNEIQDFPPEDVQVIIEGNEARISLTIFPIRALKKISVSLVYRQQTLQA.

This sequence belongs to the myoviridae tail sheath protein family. As to quaternary structure, homomultimer.

The protein localises to the virion. Its subcellular location is the host cytoplasm. Polymerizes as an extended structure around the baseplate-tail tube complex. During ejection, the sheath shifts to a contracted form, thereby making the inner tail tube protrude through the host cell envelope. This is Tail sheath protein from Staphylococcus phage Twort (strain DSM 17442 / HER 48) (Bacteriophage Twort).